The chain runs to 249 residues: DNA polymerase sliding clamp (249 aa).

It belongs to the PCNA family. In terms of assembly, homotrimer. The subunits circularize to form a toroid; DNA passes through its center. Replication factor C (RFC) is required to load the toroid on the DNA.

Its function is as follows. Sliding clamp subunit that acts as a moving platform for DNA processing. Responsible for tethering the catalytic subunit of DNA polymerase and other proteins to DNA during high-speed replication. This chain is DNA polymerase sliding clamp, found in Methanococcus vannielii (strain ATCC 35089 / DSM 1224 / JCM 13029 / OCM 148 / SB).